A 293-amino-acid polypeptide reads, in one-letter code: Protease HtpX (293 aa).

A run of 2 helical transmembrane segments spans residues 4-24 (IALFLITNLAVMLVFGLVLSL) and 34-54 (GLMIMAGLFGFGGAFVSLLMS). His-139 serves as a coordination point for Zn(2+). The active site involves Glu-140. His-143 contacts Zn(2+). The next 2 helical transmembrane spans lie at 158 to 178 (IVNTFVIFVSRLIAQVVSGFL) and 193 to 213 (LVYFAVATVLELVFGILASII). Glu-222 lines the Zn(2+) pocket.

Belongs to the peptidase M48B family. It depends on Zn(2+) as a cofactor.

The protein resides in the cell inner membrane. The protein is Protease HtpX of Pectobacterium carotovorum subsp. carotovorum (strain PC1).